Reading from the N-terminus, the 141-residue chain is ATP synthase F(0) complex subunit C2, mitochondrial (141 aa).

A mitochondrion-targeting transit peptide spans M1 to R66. The chain crosses the membrane as a helical span at residues V82–Y102. K109 is modified (N6,N6,N6-trimethyllysine). A helical membrane pass occupies residues I117–I137.

It belongs to the ATPase C chain family. In terms of assembly, F-type ATPases have 2 components, CF(1) - the catalytic core - and CF(0) - the membrane proton channel. CF(1) has five subunits: alpha(3), beta(3), gamma(1), delta(1), epsilon(1). CF(0) has three main subunits: a, b and c. Interacts with DNAJC30; interaction is direct. In terms of processing, trimethylated by ATPSCKMT at Lys-109. Methylation is required for proper incorporation of the C subunit into the ATP synthase complex and mitochondrial respiration.

It is found in the mitochondrion membrane. In terms of biological role, mitochondrial membrane ATP synthase (F(1)F(0) ATP synthase or Complex V) produces ATP from ADP in the presence of a proton gradient across the membrane which is generated by electron transport complexes of the respiratory chain. F-type ATPases consist of two structural domains, F(1) - containing the extramembraneous catalytic core and F(0) - containing the membrane proton channel, linked together by a central stalk and a peripheral stalk. During catalysis, ATP synthesis in the catalytic domain of F(1) is coupled via a rotary mechanism of the central stalk subunits to proton translocation. Part of the complex F(0) domain. A homomeric c-ring of probably 10 subunits is part of the complex rotary element. The polypeptide is ATP synthase F(0) complex subunit C2, mitochondrial (Pongo abelii (Sumatran orangutan)).